A 330-amino-acid polypeptide reads, in one-letter code: 4,5-dihydroxyphthalate decarboxylase (330 aa).

This sequence to P.putida DHP decarboxylase.

It carries out the reaction 4,5-dihydroxyphthalate + H(+) = 3,4-dihydroxybenzoate + CO2. It participates in xenobiotic degradation; phthalate degradation; 3,4-dihydroxybenzoate from phthalate: step 3/3. The protein is 4,5-dihydroxyphthalate decarboxylase (phtD) of Comamonas testosteroni (Pseudomonas testosteroni).